We begin with the raw amino-acid sequence, 460 residues long: C4-dicarboxylate transport protein (460 aa).

8 helical membrane-spanning segments follow: residues 21–38 (LYFQ…IGHF), 53–75 (FIKL…GIAG), 88–110 (YALL…VVNV), 153–175 (IVGA…FGFA), 196–218 (VMFN…AMAF), 231–253 (LGQL…LGSI), 301–323 (VVGL…YLTM), and 363–385 (FIVL…ALIL). Residues 438–460 (PEDDLGVAEGPTPANAVNTTKTV) are disordered.

Belongs to the dicarboxylate/amino acid:cation symporter (DAACS) (TC 2.A.23) family.

The protein resides in the cell inner membrane. Responsible for the transport of dicarboxylates such as succinate, fumarate, and malate from the periplasm across the membrane. The protein is C4-dicarboxylate transport protein of Pseudomonas syringae pv. tomato (strain ATCC BAA-871 / DC3000).